Here is a 190-residue protein sequence, read N- to C-terminus: Elongation factor P-like protein (190 aa).

The protein belongs to the elongation factor P family.

This chain is Elongation factor P-like protein, found in Cronobacter sakazakii (strain ATCC BAA-894) (Enterobacter sakazakii).